A 619-amino-acid chain; its full sequence is Sodium-coupled monocarboxylate transporter 2 (619 aa).

Topologically, residues 1–9 are extracellular; that stretch reads MRVKNFEAW. A helical transmembrane segment spans residues 10 to 30; it reads DYVVFAGLFVISSGIGVFFAI. The Cytoplasmic segment spans residues 31–47; that stretch reads KERKKTTSREFLVGGRQ. A helical transmembrane segment spans residues 48–68; the sequence is MSFGPVALSLTASFMSAVTVL. Residues 69–80 lie on the Extracellular side of the membrane; it reads GTPAEVYRFGAS. Residues 81-101 traverse the membrane as a helical segment; it reads FFLFLISYVFVVFFTSELFLP. Residues 102–128 lie on the Cytoplasmic side of the membrane; the sequence is VFYRSGITSTYEYLQLRFNKPVRYAAT. Residues 129-149 traverse the membrane as a helical segment; it reads IIYIVQTILYTGVVVYAPALA. Topologically, residues 150–157 are extracellular; that stretch reads LNQVTGFN. Residues 158-178 form a helical membrane-spanning segment; sequence LWASVFATGIVCTFYCSLGGL. The Cytoplasmic segment spans residues 179 to 180; sequence KA. A helical membrane pass occupies residues 181–201; sequence VVWTDAFQMVVMIVGFLTVLI. Over 202–235 the chain is Extracellular; that stretch reads QGSNHVGGFNNVLEKAGNGSRLHIVDFDVDPLRR. N-linked (GlcNAc...) asparagine glycosylation is present at asparagine 219. Residues 236–256 form a helical membrane-spanning segment; sequence HTFWTITIGGTFTWLGVYGVN. Residues 257-275 lie on the Cytoplasmic side of the membrane; that stretch reads QSTIQRCISCKTEKHAKLA. Residues 276-296 form a helical membrane-spanning segment; it reads LYFNLLGLWIIVACAVFSGLI. Residues 297-321 lie on the Extracellular side of the membrane; that stretch reads MYSHFKDCDPWTSGVISAPDQLMPY. The chain crosses the membrane as a helical span at residues 322–342; it reads FVMEIFATMPGLPGLFVACAF. The Cytoplasmic portion of the chain corresponds to 343–385; the sequence is SGTLSTVAASINALATVTFEDFVKSCFPHLSDKLSTWISKGLC. The helical transmembrane segment at 386-406 threads the bilayer; the sequence is ILFGIMCTSMAVVASLMGSVV. Residues 407-411 lie on the Extracellular side of the membrane; that stretch reads QAALS. Residues 412-432 form a helical membrane-spanning segment; that stretch reads IHGMCGGPMLGLFTLGLVFPF. At 433–437 the chain is on the cytoplasmic side; it reads VNWKG. The helical transmembrane segment at 438–458 threads the bilayer; it reads ALGGLLTGITLSFWVAIGSFI. The Extracellular segment spans residues 459–504; the sequence is YPAPESKTLPLPLSTEHCVELNITTTVAPQISSRPVLADTWYSLSY. Asparagine 480 carries an N-linked (GlcNAc...) asparagine glycan. Residues 505 to 525 form a helical membrane-spanning segment; it reads LYFSAVGCLGCIAAGIIISFL. Topologically, residues 526 to 619 are cytoplasmic; it reads TGKQRGKDID…NSVPEKTTYF (94 aa).

The protein belongs to the sodium:solute symporter (SSF) (TC 2.A.21) family. Expressed in the cortical region of the kidney corresponding to the proximal tubule. Expressed in Mueller cells of the inner retina (at protein level). Isoform 1 is expressed in the retina, kidney, small intestine and skeletal muscle. Isoform 2 is not detected in the kidney, small intestine and skeletal muscle. In the kidney, expressed predominantly in tubular epithelial cells of the cortical region and in the convoluted portions of the proximal tubule (pars convoluta). In the small intestine, its expression is highest in the proximal part and gradually decreased towards the distal end. Expressed in the neural retina. Not detected in the caecum and colon.

It localises to the apical cell membrane. The catalysed reaction is (S)-lactate(out) + Na(+)(out) = (S)-lactate(in) + Na(+)(in). It carries out the reaction nicotinate(out) + Na(+)(out) = nicotinate(in) + Na(+)(in). It catalyses the reaction pyruvate(out) + Na(+)(out) = pyruvate(in) + Na(+)(in). The enzyme catalyses propanoate(out) + Na(+)(out) = propanoate(in) + Na(+)(in). The catalysed reaction is butanoate(out) + Na(+)(out) = butanoate(in) + Na(+)(in). It carries out the reaction acetoacetate(out) + Na(+)(out) = acetoacetate(in) + Na(+)(in). In terms of biological role, acts as an electroneutral and low-affinity sodium (Na(+))-dependent sodium-coupled solute transporter. Catalyzes the transport across the plasma membrane of many monocarboxylates such as lactate, pyruvate, nicotinate, propionate, butyrate and beta-D-hydroxybutyrate. May be responsible for the first step of reabsorption of monocarboxylates from the lumen of the proximal tubule of the kidney and the small intestine. May play also a role in monocarboxylates transport in the retina. Mediates electroneutral uptake of lactate, with a stoichiometry of 2 Na(+) for each lactate. This is Sodium-coupled monocarboxylate transporter 2 (Slc5a12) from Mus musculus (Mouse).